The sequence spans 500 residues: Cytochrome P450 monooxygenase ausI (500 aa).

Residues 8-28 (LALLGQPLVPGLMVVSAILYL) form a helical membrane-spanning segment. Cysteine 440 is a heme binding site.

The protein belongs to the cytochrome P450 family. Heme serves as cofactor.

It is found in the membrane. It participates in secondary metabolite biosynthesis; terpenoid biosynthesis. Its function is as follows. Cytochrome P450 monooxygenase; part of the gene cluster B that mediates the biosynthesis of the fungal meroterpenoid acetoxydehydroaustin. The first step of the pathway is the synthesis of 3,5-dimethylorsellinic acid by the polyketide synthase ausA. 3,5-dimethylorsellinic acid is then prenylated by the polyprenyl transferase ausN. Further epoxidation by the FAD-dependent monooxygenase ausM and cyclization by the probable terpene cyclase ausL lead to the formation of protoaustinoid A. Protoaustinoid A is then oxidized to spiro-lactone preaustinoid A3 by the combined action of the FAD-binding monooxygenases ausB and ausC, and the dioxygenase ausE. Acid-catalyzed keto-rearrangement and ring contraction of the tetraketide portion of preaustinoid A3 by ausJ lead to the formation of preaustinoid A4. The aldo-keto reductase ausK, with the help of ausH, is involved in the next step by transforming preaustinoid A4 into isoaustinone which is in turn hydroxylated by the P450 monooxygenase ausI to form austinolide. The cytochrome P450 monooxygenase ausG then modifies austinolide to austinol. Austinol is further acetylated to austin by the O-acetyltransferase ausP, which spontaneously changes to dehydroaustin. The cytochrome P450 monooxygenase then converts dehydroaustin is into 7-dehydrodehydroaustin. The hydroxylation catalyzed by ausR permits the second O-acetyltransferase ausQ to add an additional acetyl group to the molecule, leading to the formation of acetoxydehydroaustin. Due to genetic rearrangements of the clusters and the subsequent loss of some enzymes, the end product of the Penicillium brasilianum austinoid biosynthesis clusters is acetoxydehydroaustin. The sequence is that of Cytochrome P450 monooxygenase ausI from Penicillium brasilianum.